Reading from the N-terminus, the 410-residue chain is Lissencephaly-1 homolog (410 aa).

The 33-residue stretch at 7-39 folds into the LisH domain; that stretch reads QRDELNRAIADYLRSNGYEEAYSVFKKEAELDV. A coiled-coil region spans residues 56 to 82; sequence TSVIRLQKKVMELESKLNEAKEEFTSG. 7 WD repeats span residues 106–147, 148–187, 190–229, 232–271, 274–333, 336–377, and 378–410; these read GHRS…RTLK, GHTD…CIRT, GHDH…CVKT, GHRE…CKAE, EHEH…CLMT, GHDN…KTLN, and AHEH…WECR.

It belongs to the WD repeat LIS1/nudF family. As to quaternary structure, can self-associate. Component of the cytosolic PAF-AH (I) heterotetrameric enzyme, which is composed of PAFAH1B1 (beta), PAFAH1B2 (alpha2) and PAFAH1B3 (alpha1) subunits. The catalytic activity of the enzyme resides in the alpha1 (PAFAH1B3) and alpha2 (PAFAH1B2) subunits, whereas the beta subunit (PAFAH1B1) has regulatory activity. Trimer formation is not essential for the catalytic activity. Interacts with dynein, dynactin, NDE1 and NDEL1.

The protein localises to the cytoplasm. It localises to the cytoskeleton. It is found in the microtubule organizing center. Its subcellular location is the centrosome. Its function is as follows. Regulatory subunit (beta subunit) of the cytosolic type I platelet-activating factor (PAF) acetylhydrolase (PAF-AH (I)), an enzyme that catalyzes the hydrolyze of the acetyl group at the sn-2 position of PAF and its analogs and participates in PAF inactivation. Regulates the PAF-AH (I) activity in a catalytic dimer composition-dependent manner. Positively regulates the activity of the minus-end directed microtubule motor protein dynein. May enhance dynein-mediated microtubule sliding by targeting dynein to the microtubule plus end. Required for several dynein- and microtubule-dependent processes such as the maintenance of Golgi integrity, the peripheral transport of microtubule fragments and the coupling of the nucleus and centrosome. May be required for proliferation of neuronal precursors and neuronal migration. The polypeptide is Lissencephaly-1 homolog (Gallus gallus (Chicken)).